The sequence spans 693 residues: Golgin subfamily A member 6D (693 aa).

The stretch at 14–611 (LEESRQNKLA…KLLELQELVL (598 aa)) forms a coiled coil. Disordered regions lie at residues 20-70 (NKLA…GDSQ), 497-547 (LPGE…GTEQ), and 662-693 (VEPA…MQDT). Positions 537–547 (LPKEKADGTEQ) are enriched in basic and acidic residues. The span at 674–693 (PHNNPTVQQIVQLSPVMQDT) shows a compositional bias: polar residues.

This sequence belongs to the GOLGA6 family.

This is Golgin subfamily A member 6D (GOLGA6D) from Homo sapiens (Human).